We begin with the raw amino-acid sequence, 214 residues long: Alpha-S1-casein (214 aa).

The signal sequence occupies residues M1–A15. The tract at residues I59–A91 is disordered. Phosphoserine occurs at positions 61, 63, 79, 80, 81, 82, 83, 90, and 130.

The protein belongs to the alpha-casein family. Mammary gland specific. Secreted in milk.

It is found in the secreted. Functionally, important role in the capacity of milk to transport calcium phosphate. The sequence is that of Alpha-S1-casein (CSN1S1) from Capra hircus (Goat).